Consider the following 336-residue polypeptide: DNA-directed RNA polymerase subunit alpha (336 aa).

The alpha N-terminal domain (alpha-NTD) stretch occupies residues 1 to 235; the sequence is MIEFVIPKKL…HFKIVTEGLP (235 aa). Residues 264–336 form an alpha C-terminal domain (alpha-CTD) region; sequence RENSDVYNRK…KFGLELRKGE (73 aa).

This sequence belongs to the RNA polymerase alpha chain family. Homodimer. The RNAP catalytic core consists of 2 alpha, 1 beta, 1 beta' and 1 omega subunit. When a sigma factor is associated with the core the holoenzyme is formed, which can initiate transcription.

The catalysed reaction is RNA(n) + a ribonucleoside 5'-triphosphate = RNA(n+1) + diphosphate. Its function is as follows. DNA-dependent RNA polymerase catalyzes the transcription of DNA into RNA using the four ribonucleoside triphosphates as substrates. This is DNA-directed RNA polymerase subunit alpha from Thermotoga maritima (strain ATCC 43589 / DSM 3109 / JCM 10099 / NBRC 100826 / MSB8).